The sequence spans 88 residues: uncharacterized protein (88 aa).

Transmembrane regions (helical) follow at residues 3 to 23 (VFIL…CSVA), 33 to 53 (VAPG…AFTA), and 61 to 81 (FIGG…PFFF).

Its subcellular location is the cell membrane. This is an uncharacterized protein from Bacillus subtilis (strain 168).